A 374-amino-acid polypeptide reads, in one-letter code: Tuliposide A-converting enzyme b1, amyloplastic (374 aa).

An amyloplast-targeting transit peptide spans 1-68; that stretch reads MSVALFCGPP…TNSSLSPSPT (68 aa). S226 functions as the Acyl-ester intermediate in the catalytic mechanism. Catalysis depends on charge relay system residues D316 and H348.

This sequence belongs to the AB hydrolase superfamily. Homodimer. Highly expressed in pistil and bulb scales. Lower expression in stem, and barely detected in root, leaf, petal and stamen.

Its subcellular location is the plastid. It localises to the amyloplast. It catalyses the reaction 6-tuliposide A = tulipalin A + D-glucose. In terms of biological role, lactone-forming carboxylesterases, specifically catalyzing intramolecular transesterification, but not hydrolysis. Involved in the biosynthesis of tulipalins, defensive chemicals that show antimicrobial activities against a broad range of strains of bacteria and fungi. Substrates are 6-tuliposide A &gt; 6-tuliposide B. The chain is Tuliposide A-converting enzyme b1, amyloplastic (TCEA-B1) from Tulipa gesneriana (Garden tulip).